Reading from the N-terminus, the 253-residue chain is 3-deoxy-manno-octulosonate cytidylyltransferase (253 aa).

The protein belongs to the KdsB family.

Its subcellular location is the cytoplasm. It carries out the reaction 3-deoxy-alpha-D-manno-oct-2-ulosonate + CTP = CMP-3-deoxy-beta-D-manno-octulosonate + diphosphate. The protein operates within nucleotide-sugar biosynthesis; CMP-3-deoxy-D-manno-octulosonate biosynthesis; CMP-3-deoxy-D-manno-octulosonate from 3-deoxy-D-manno-octulosonate and CTP: step 1/1. Its pathway is bacterial outer membrane biogenesis; lipopolysaccharide biosynthesis. Its function is as follows. Activates KDO (a required 8-carbon sugar) for incorporation into bacterial lipopolysaccharide in Gram-negative bacteria. This Neisseria gonorrhoeae (strain ATCC 700825 / FA 1090) protein is 3-deoxy-manno-octulosonate cytidylyltransferase.